Reading from the N-terminus, the 298-residue chain is MKQIAFIGLGHMGAPMATNLLKAGYLLNVFDLVQSAVDGLVAAGASAARSARDAVQGADVVISMLPASQHVEGLYLDDDGLLAHIAPGTLVLECSTIAPTSARKIHAAARERGLAMLDAPVSGGTAGAAAGTLTFMVGGDAEALEKARPLFEAMGRNIFHAGPDGAGQVAKVCNNQLLAVLMIGTAEAMALGVANGLEAKVLAEIMRRSSGGNWALEVYNPWPGVMENAPASRDYSGGFMAQLMAKDLGLAQEAAQASASSTPMGSLALSLYRLLLKQGYAERDFSVVQKLFDPTQGQ.

Residues 2–31 (KQIA…NVFD), 65–66 (LP), Pro-66, and Thr-96 each bind NAD(+). Lys-171 is an active-site residue. Lys-246 is a binding site for NAD(+).

The protein belongs to the HIBADH-related family. As to quaternary structure, homotetramer, dimer of dimers.

The enzyme catalyses L-serine + NAD(+) = aminoacetaldehyde + CO2 + NADH. The protein operates within amino-acid degradation. NAD-dependent L-serine dehydrogenase that catalyzes the oxidation of L-serine and methyl-L-serine and is possibly involved in serine catabolism. Has low activity toward beta-hydroxyisobutyrate. The sequence is that of NAD-dependent L-serine dehydrogenase from Pseudomonas aeruginosa (strain ATCC 15692 / DSM 22644 / CIP 104116 / JCM 14847 / LMG 12228 / 1C / PRS 101 / PAO1).